We begin with the raw amino-acid sequence, 213 residues long: Thiopurine S-methyltransferase (213 aa).

S-adenosyl-L-methionine-binding residues include Trp10, Leu46, Glu67, and Arg124.

This sequence belongs to the class I-like SAM-binding methyltransferase superfamily. TPMT family.

The protein resides in the cytoplasm. The enzyme catalyses S-adenosyl-L-methionine + a thiopurine = S-adenosyl-L-homocysteine + a thiopurine S-methylether.. The protein is Thiopurine S-methyltransferase of Xanthobacter autotrophicus (strain ATCC BAA-1158 / Py2).